The chain runs to 511 residues: Arginine-containing cyclodipeptide synthase eshA (511 aa).

The short motif at 413–417 (DDSAE) is the Conserved DDXXE motif element.

This sequence belongs to the arginine-containing cyclodipeptide synthase family.

It carries out the reaction L-arginyl-tRNA(Arg) + L-leucyl-tRNA(Leu) = cyclo(L-arginyl-L-leucyl) + tRNA(Arg) + tRNA(Leu) + 2 H(+). It participates in secondary metabolite biosynthesis. In terms of biological role, arginine-containing cyclodipeptide synthase; part of the cluster that mediates the biosynthesis of a highly modified cyclo-arginine-leucine dipeptide (cRW). Within the pathway, eshA acts as the scaffold-generating enzyme and is responsible for formation of the cyclo-Arg-Leu diketopiperazine (cRL) from L-arginyl-tRNA(Arg) + L-Leucyl-tRNA(Leu). Additional enzymes from the cluster then further modify the cyclo-Arg-Leu diketopiperazine (cRW) scaffold. This chain is Arginine-containing cyclodipeptide synthase eshA, found in Penicillium shearii (Eupenicillium shearii).